We begin with the raw amino-acid sequence, 376 residues long: Inactive 2'-5'-oligoadenylate synthase 1B (376 aa).

Topologically, residues 1–351 are cytoplasmic; the sequence is MEQDLRSIPA…VPTEVGVPMK (351 aa). Residues 352–370 traverse the membrane as a helical; Anchor for type IV membrane protein segment; the sequence is YLLCRIFWLLFWSLFHFIF. Residues 371–376 lie on the Extracellular side of the membrane; it reads GKTSSG.

This sequence belongs to the 2-5A synthase family. In terms of assembly, interacts with OSBPL1A and ABCF3. Highly expressed in lung, spleen and thymus. Also detected at lower levels in heart, kidney, liver, lung, skeletal muscle, testes, uterus and ovaries.

It localises to the endoplasmic reticulum membrane. In terms of biological role, does not have 2'-5'-OAS activity, but can bind double-stranded RNA. The full-length protein displays antiviral activity against flaviviruses such as west Nile virus (WNV) via an alternative antiviral pathway independent of RNase L. The truncated form of the protein lacks antiviral activity. The protein is Inactive 2'-5'-oligoadenylate synthase 1B (Oas1b) of Mus musculus (Mouse).